Here is a 351-residue protein sequence, read N- to C-terminus: Nitronate monooxygenase (351 aa).

FMN contacts are provided by residues L21, N69, Q176, G181, G218, and 237–240; that span reads QMGT.

The protein belongs to the nitronate monooxygenase family. NMO class I subfamily. The cofactor is FMN.

The enzyme catalyses 3 propionate 3-nitronate + 3 O2 + H2O = 3 3-oxopropanoate + 2 nitrate + nitrite + H2O2 + 3 H(+). In terms of biological role, nitronate monooxygenase that uses molecular oxygen to catalyze the oxidative denitrification of alkyl nitronates. The toxin propionate 3-nitronate (P3N) is the best substrate (and the presumed physiological substrate), but this enzyme is also active on other primary and secondary nitronates such as propyl-1-nitronate, ethylnitronate, pentyl-1-nitronate, butyl-1-nitronate and propyl-2-nitronate. Is likely involved in the degradation of P3N, that allows P.aeruginosa PAO1 to grow on 3-nitropropionate/P3N as the sole nitrogen source. Also functions in the detoxification of P3N, a metabolic poison produced by plants and fungi as a defense mechanism. Cannot oxidize nitroalkanes such as 3-nitropropionate, nitroethane, 1-nitropropane, 1-nitrobutane, 1-nitropentane, or 2-nitropropane. This Pseudomonas aeruginosa (strain ATCC 15692 / DSM 22644 / CIP 104116 / JCM 14847 / LMG 12228 / 1C / PRS 101 / PAO1) protein is Nitronate monooxygenase.